Reading from the N-terminus, the 210-residue chain is MENTEKLKNSKEIVAYLVEKFPACFIAEGEAKPLKIGIFQDLAERLADDARVSKTMLRSALRQYTSSWRYLHGLKAGQARVDLDGNPGELLTEEHIEHAKQALKESKERVFASRRTNNKEEKAKQPRRPAPRKADAAAKSDKPKAAPKAVVADAPLVKVDAANLKVDQGVRVVLGKSPVPATIKEVTKDDVQVQLQTGMMLQVKFEHLVL.

Composition is skewed to basic and acidic residues over residues 103 to 124 and 132 to 144; these read LKES…EKAK and RKAD…DKPK. The tract at residues 103–148 is disordered; sequence LKESKERVFASRRTNNKEEKAKQPRRPAPRKADAAAKSDKPKAAPK.

The protein belongs to the ProQ family.

It localises to the cytoplasm. In terms of biological role, RNA chaperone with significant RNA binding, RNA strand exchange and RNA duplexing activities. This Aeromonas salmonicida (strain A449) protein is RNA chaperone ProQ.